We begin with the raw amino-acid sequence, 361 residues long: Peptide chain release factor 1 (361 aa).

At Gln237 the chain carries N5-methylglutamine. Positions 283–307 (AQQQEQQEQQSSTRKELIGSGDRSQ) are disordered.

The protein belongs to the prokaryotic/mitochondrial release factor family. Methylated by PrmC. Methylation increases the termination efficiency of RF1.

The protein resides in the cytoplasm. Peptide chain release factor 1 directs the termination of translation in response to the peptide chain termination codons UAG and UAA. The polypeptide is Peptide chain release factor 1 (Vesicomyosocius okutanii subsp. Calyptogena okutanii (strain HA)).